The primary structure comprises 71 residues: DNA-directed RNA polymerase subunit epsilon (71 aa).

The protein belongs to the RNA polymerase subunit epsilon family. As to quaternary structure, RNAP is composed of a core of 2 alpha, a beta and a beta' subunit. The core is associated with a delta subunit, and at least one of epsilon or omega. When a sigma factor is associated with the core the holoenzyme is formed, which can initiate transcription.

The catalysed reaction is RNA(n) + a ribonucleoside 5'-triphosphate = RNA(n+1) + diphosphate. A non-essential component of RNA polymerase (RNAP). This is DNA-directed RNA polymerase subunit epsilon from Geobacillus thermodenitrificans (strain NG80-2).